We begin with the raw amino-acid sequence, 342 residues long: Protein RecA (342 aa).

Belongs to the RecA family.

It is found in the cytoplasm. In terms of biological role, can catalyze the hydrolysis of ATP in the presence of single-stranded DNA, the ATP-dependent uptake of single-stranded DNA by duplex DNA, and the ATP-dependent hybridization of homologous single-stranded DNAs. It interacts with LexA causing its activation and leading to its autocatalytic cleavage. This Pectobacterium carotovorum (Erwinia carotovora) protein is Protein RecA.